The following is a 341-amino-acid chain: Basic membrane protein D (341 aa).

The first 16 residues, 1–16 (MLKKVYYFLIFLFIVA), serve as a signal peptide directing secretion. C17 is lipidated: N-palmitoyl cysteine. The S-diacylglycerol cysteine moiety is linked to residue C17.

Belongs to the BMP lipoprotein family. As to quaternary structure, monomer.

It is found in the cell inner membrane. Binds adenosine and inosine. May be part of an ABC-type nucleoside uptake system involved in the purine salvage pathway. The sequence is that of Basic membrane protein D from Borreliella burgdorferi (strain JD1) (Borrelia burgdorferi).